The chain runs to 501 residues: Sucrose-6-phosphate hydrolase (501 aa).

Residues Leu-44–Asp-47, Gln-63, Tyr-106–Thr-107, Arg-167–Asp-168, and Glu-222 contribute to the substrate site. Asp-47 is a catalytic residue.

This sequence belongs to the glycosyl hydrolase 32 family.

The enzyme catalyses Hydrolysis of terminal non-reducing beta-D-fructofuranoside residues in beta-D-fructofuranosides.. It functions in the pathway glycan biosynthesis; sucrose metabolism. The polypeptide is Sucrose-6-phosphate hydrolase (scrB) (Pediococcus pentosaceus).